The sequence spans 733 residues: Phosphoribosylformylglycinamidine synthase subunit PurL (733 aa).

Residue histidine 42 is part of the active site. ATP contacts are provided by tyrosine 45 and lysine 84. Mg(2+) is bound at residue glutamate 86. Substrate-binding positions include 87–90 and arginine 109; that span reads SHNH. Histidine 88 (proton acceptor) is an active-site residue. Residue aspartate 110 participates in Mg(2+) binding. A substrate-binding site is contributed by glutamine 233. Aspartate 261 lines the Mg(2+) pocket. Residue 305–307 participates in substrate binding; it reads ESQ. Residues aspartate 489 and glycine 526 each contribute to the ATP site. Asparagine 527 provides a ligand contact to Mg(2+). Residue serine 529 participates in substrate binding.

This sequence belongs to the FGAMS family. As to quaternary structure, monomer. Part of the FGAM synthase complex composed of 1 PurL, 1 PurQ and 2 PurS subunits.

It localises to the cytoplasm. The catalysed reaction is N(2)-formyl-N(1)-(5-phospho-beta-D-ribosyl)glycinamide + L-glutamine + ATP + H2O = 2-formamido-N(1)-(5-O-phospho-beta-D-ribosyl)acetamidine + L-glutamate + ADP + phosphate + H(+). It participates in purine metabolism; IMP biosynthesis via de novo pathway; 5-amino-1-(5-phospho-D-ribosyl)imidazole from N(2)-formyl-N(1)-(5-phospho-D-ribosyl)glycinamide: step 1/2. Its function is as follows. Part of the phosphoribosylformylglycinamidine synthase complex involved in the purines biosynthetic pathway. Catalyzes the ATP-dependent conversion of formylglycinamide ribonucleotide (FGAR) and glutamine to yield formylglycinamidine ribonucleotide (FGAM) and glutamate. The FGAM synthase complex is composed of three subunits. PurQ produces an ammonia molecule by converting glutamine to glutamate. PurL transfers the ammonia molecule to FGAR to form FGAM in an ATP-dependent manner. PurS interacts with PurQ and PurL and is thought to assist in the transfer of the ammonia molecule from PurQ to PurL. This Moorella thermoacetica (strain ATCC 39073 / JCM 9320) protein is Phosphoribosylformylglycinamidine synthase subunit PurL.